The following is a 37-amino-acid chain: Large ribosomal subunit protein bL36c (37 aa).

Belongs to the bacterial ribosomal protein bL36 family.

The protein localises to the plastid. Its subcellular location is the chloroplast. The chain is Large ribosomal subunit protein bL36c (rpl36) from Nephroselmis olivacea (Green alga).